The following is a 470-amino-acid chain: Cysteine--tRNA ligase (470 aa).

Cys27 serves as a coordination point for Zn(2+). The short motif at 29-39 (PTVYNFFHIGN) is the 'HIGH' region element. Residues Cys211, His236, and Glu240 each contribute to the Zn(2+) site. The 'KMSKS' region signature appears at 268-272 (KMSKS). Residue Lys271 participates in ATP binding.

It belongs to the class-I aminoacyl-tRNA synthetase family. As to quaternary structure, monomer. The cofactor is Zn(2+).

The protein resides in the cytoplasm. It carries out the reaction tRNA(Cys) + L-cysteine + ATP = L-cysteinyl-tRNA(Cys) + AMP + diphosphate. In Clostridium botulinum (strain Eklund 17B / Type B), this protein is Cysteine--tRNA ligase.